The sequence spans 331 residues: Nacrein-like protein P1 (331 aa).

One can recognise an Alpha-carbonic anhydrase domain in the interval 1-331; it reads QSPINIVSYD…LHALRNVEGY (331 aa). Residues histidine 69, histidine 71, and histidine 94 each contribute to the Zn(2+) site. Residues 138 to 240 are disordered; that stretch reads DEPDDEECKR…GENGHKHGCR (103 aa). The segment covering 144–156 has biased composition (basic and acidic residues); sequence ECKRILKGHHPDN. Residues 157-232 show a composition bias toward low complexity; that stretch reads NENGNGDNGN…NNGENGNNGE (76 aa). Repeat copies occupy residues 162 to 164, 165 to 167, 168 to 170, 171 to 173, 174 to 176, 177 to 179, 180 to 182, 183 to 185, 186 to 188, 189 to 191, 192 to 194, 195 to 197, 198 to 200, 201 to 203, 204 to 206, 207 to 209, 210 to 212, 213 to 215, 216 to 218, 219 to 221, 222 to 224, 225 to 227, 228 to 229, and 231 to 233. A 24 X 3 AA approximate tandem repeats of G-X-N region spans residues 162 to 233; that stretch reads GDNGNNGYNG…NGENGNNGEN (72 aa). A substrate-binding site is contributed by 298 to 299; sequence TT.

Belongs to the alpha-carbonic anhydrase family. As to quaternary structure, homooligomer; disulfide-linked. May also be disulfide-linked to insoluble organic matrix. Requires Zn(2+) as cofactor. In terms of tissue distribution, expressed in the mantle.

The protein localises to the secreted. It is found in the extracellular space. It localises to the extracellular matrix. The catalysed reaction is hydrogencarbonate + H(+) = CO2 + H2O. Its function is as follows. Acts as a negative regulator for calcification in the shells of mollusks. May function both as a calcium concentrator and as a carbonic anhydrase required for production of carbonate ions, which are assembled to CaCO(3) at mineralization sites. Is important for shell formation in both the calcitic prismatic layer and the aragonitic nacreous layer. Shows inhibitory activity of crystal formation when present in free state but, when attached to the insoluble matrix, may regulate the form and size of aragonite crystal. In Mizuhopecten yessoensis (Japanese scallop), this protein is Nacrein-like protein P1.